Here is a 435-residue protein sequence, read N- to C-terminus: MLDLKLLRDRPEQVRQALQNRRATVDLDGILQLDRERRQLETRKGSLQAESNSLGKKVGEIIRQGADPQGPEVAALRQRGVDLKAEIAQLEQQERELEEEIRARLLTLPNLPLPSVPVGRDEADNVEVRRWGEELKPAHPVLPHDEIAEKLGLLEIGRAVKVAQSRFVAMVGAGAALERALIAMMLERHIAAGYTEVIPPFLVNSAALQGTGQLPKFAEDSFRCADDDLWLIPTAEVPLTNLYRDEMIPAESLPLYFCAYTPCFRREAGSYGRDTKGLIRLHQFQKVELVKVTRPDQSEAEHEKLVQDAEAILQMLELPYRVVELCSGDLGFAAARCFDLEVWFPSQNQYREISSCSNCWDFQARRANLRYKEAGQKGTQFVHTLNGSGLAVGRSLAALLENHQQPDGSIRIPKALRPFLSSRFLSEDGILIPAA.

234-236 serves as a coordination point for L-serine; it reads TAE. 265–267 is a binding site for ATP; the sequence is RRE. An L-serine-binding site is contributed by E288. Residue 352-355 coordinates ATP; it reads EISS. S388 is an L-serine binding site.

This sequence belongs to the class-II aminoacyl-tRNA synthetase family. Type-1 seryl-tRNA synthetase subfamily. As to quaternary structure, homodimer. The tRNA molecule binds across the dimer.

Its subcellular location is the cytoplasm. The catalysed reaction is tRNA(Ser) + L-serine + ATP = L-seryl-tRNA(Ser) + AMP + diphosphate + H(+). It carries out the reaction tRNA(Sec) + L-serine + ATP = L-seryl-tRNA(Sec) + AMP + diphosphate + H(+). It functions in the pathway aminoacyl-tRNA biosynthesis; selenocysteinyl-tRNA(Sec) biosynthesis; L-seryl-tRNA(Sec) from L-serine and tRNA(Sec): step 1/1. Its function is as follows. Catalyzes the attachment of serine to tRNA(Ser). Is also able to aminoacylate tRNA(Sec) with serine, to form the misacylated tRNA L-seryl-tRNA(Sec), which will be further converted into selenocysteinyl-tRNA(Sec). The chain is Serine--tRNA ligase from Synechococcus sp. (strain JA-2-3B'a(2-13)) (Cyanobacteria bacterium Yellowstone B-Prime).